The primary structure comprises 89 residues: Omega-theraphotoxin-Ba1c (89 aa).

Positions 1 to 23 (MRSLTLAAVLACSLLLVFHTSAA) are cleaved as a signal peptide. The propeptide occupies 24–50 (EEHEAQEGYLMNPGDTDTALATVDDER). 3 disulfide bridges follow: Cys-54-Cys-75, Cys-58-Cys-81, and Cys-67-Cys-86.

Belongs to the neurotoxin 12 (Hwtx-2) family. 06 (TXP1) subfamily. In terms of tissue distribution, expressed by the venom gland.

Its subcellular location is the secreted. In terms of biological role, inhibits voltage-gated calcium channels (Cav) in rat cerebellar granule cells. Has insecticidal activity. The polypeptide is Omega-theraphotoxin-Ba1c (Brachypelma albiceps (Mexican golden redrump tarantula)).